Consider the following 120-residue polypeptide: UPF0102 protein Caur_2698 (120 aa).

Belongs to the UPF0102 family.

The polypeptide is UPF0102 protein Caur_2698 (Chloroflexus aurantiacus (strain ATCC 29366 / DSM 635 / J-10-fl)).